The following is a 441-amino-acid chain: ATP-dependent RNA helicase sub2 (441 aa).

Positions 19–29 are enriched in low complexity; it reads DAAATTAAPAA. The interval 19-43 is disordered; that stretch reads DAAATTAAPAANGAQDKKGDLTVSG. The Q motif signature appears at 58–86; that stretch reads TGFRDFLLKGELLRAITDCGFEHPSEVQQ. Residues 89–264 form the Helicase ATP-binding domain; it reads IPTAILNVDV…KKFMRNPLEV (176 aa). ATP is bound at residue 102–109; the sequence is AKSGLGKT. The DEAD box motif lies at 211–214; that stretch reads DECD. Positions 276–437 constitute a Helicase C-terminal domain; sequence GLQQYYIKLS…EYPEGGVDSS (162 aa).

This sequence belongs to the DEAD box helicase family. DECD subfamily.

It localises to the nucleus. The enzyme catalyses ATP + H2O = ADP + phosphate + H(+). In terms of biological role, ATP-binding RNA helicase involved in transcription elongation and required for the export of mRNA out of the nucleus. SUB2 also plays a role in pre-mRNA splicing and spliceosome assembly. May be involved in rDNA and telomeric silencing, and maintenance of genome integrity. This is ATP-dependent RNA helicase sub2 (sub2) from Neosartorya fischeri (strain ATCC 1020 / DSM 3700 / CBS 544.65 / FGSC A1164 / JCM 1740 / NRRL 181 / WB 181) (Aspergillus fischerianus).